A 135-amino-acid chain; its full sequence is METTLAIVKPDGVKRGLIGEILKRYENKGLRLKAAKVITPTIELLEKHYEEHKGKPYYKPLIQYMSSGPVFAMVLEGENAVKIVRLLNGATKVEEALPGTIRGDFAISTTFNIIHGSDSIESAKREIALWFPELA.

Lys-9, Tyr-57, Arg-85, Thr-91, Arg-102, and Asn-112 together coordinate ATP. His-115 acts as the Pros-phosphohistidine intermediate in catalysis.

This sequence belongs to the NDK family. In terms of assembly, homotetramer. It depends on Mg(2+) as a cofactor.

It localises to the cytoplasm. It carries out the reaction a 2'-deoxyribonucleoside 5'-diphosphate + ATP = a 2'-deoxyribonucleoside 5'-triphosphate + ADP. The catalysed reaction is a ribonucleoside 5'-diphosphate + ATP = a ribonucleoside 5'-triphosphate + ADP. Major role in the synthesis of nucleoside triphosphates other than ATP. The ATP gamma phosphate is transferred to the NDP beta phosphate via a ping-pong mechanism, using a phosphorylated active-site intermediate. This is Nucleoside diphosphate kinase from Thermoanaerobacter pseudethanolicus (strain ATCC 33223 / 39E) (Clostridium thermohydrosulfuricum).